Consider the following 216-residue polypeptide: Large ribosomal subunit protein uL3 (216 aa).

Residues 134–153 are disordered; the sequence is RATHGNSRSHNVPGSIGMAQ. At Gln153 the chain carries N5-methylglutamine.

Belongs to the universal ribosomal protein uL3 family. Part of the 50S ribosomal subunit. Forms a cluster with proteins L14 and L19. In terms of processing, methylated by PrmB.

Functionally, one of the primary rRNA binding proteins, it binds directly near the 3'-end of the 23S rRNA, where it nucleates assembly of the 50S subunit. The protein is Large ribosomal subunit protein uL3 of Cupriavidus pinatubonensis (strain JMP 134 / LMG 1197) (Cupriavidus necator (strain JMP 134)).